Reading from the N-terminus, the 435-residue chain is Probable histidine--tRNA ligase, cytoplasmic (435 aa).

This sequence belongs to the class-II aminoacyl-tRNA synthetase family.

The protein localises to the cytoplasm. The enzyme catalyses tRNA(His) + L-histidine + ATP = L-histidyl-tRNA(His) + AMP + diphosphate + H(+). The polypeptide is Probable histidine--tRNA ligase, cytoplasmic (Encephalitozoon cuniculi (strain GB-M1) (Microsporidian parasite)).